The sequence spans 503 residues: Glutamate--tRNA ligase 1 (503 aa).

The 'HIGH' region signature appears at 17–27; sequence PSPTGFLHIGN. The 'KMSKS' region signature appears at 261–265; it reads KLSKR. An ATP-binding site is contributed by Lys264.

Belongs to the class-I aminoacyl-tRNA synthetase family. Glutamate--tRNA ligase type 1 subfamily. As to quaternary structure, monomer.

The protein resides in the cytoplasm. The enzyme catalyses tRNA(Glu) + L-glutamate + ATP = L-glutamyl-tRNA(Glu) + AMP + diphosphate. Functionally, catalyzes the attachment of glutamate to tRNA(Glu) in a two-step reaction: glutamate is first activated by ATP to form Glu-AMP and then transferred to the acceptor end of tRNA(Glu). In Levilactobacillus brevis (strain ATCC 367 / BCRC 12310 / CIP 105137 / JCM 1170 / LMG 11437 / NCIMB 947 / NCTC 947) (Lactobacillus brevis), this protein is Glutamate--tRNA ligase 1.